Here is a 286-residue protein sequence, read N- to C-terminus: Probable aquaporin PIP2-5 (286 aa).

An N-acetylmethionine modification is found at Met1. Basic and acidic residues predominate over residues 1-18 (MTKEVVGDKRSFSGKDYQ). A disordered region spans residues 1 to 23 (MTKEVVGDKRSFSGKDYQDPPPE). Residues 1 to 38 (MTKEVVGDKRSFSGKDYQDPPPEPLFDATELGKWSFYR) are Cytoplasmic-facing. Lys3 carries the post-translational modification N6,N6-dimethyllysine. Residues 39-59 (ALIAEFIATLLFLYVTIMTVI) traverse the membrane as a helical segment. Over 60–75 (GYKSQTDPALNPDQCT) the chain is Extracellular. A helical transmembrane segment spans residues 76 to 96 (GVGVLGIAWAFGGMIFILVYC). Residues 97–124 (TAGISGGHINPAVTFGLLLARKVTLVRA) lie on the Cytoplasmic side of the membrane. An NPA 1 motif is present at residues 106 to 108 (NPA). Residues 125–145 (VMYMVAQCLGAICGVALVKAF) traverse the membrane as a helical segment. Residues 146–165 (QSAYFTRYGGGANGLSDGYS) are Extracellular-facing. The chain crosses the membrane as a helical span at residues 166-186 (IGTGVAAEIIGTFVLVYTVFS). The Cytoplasmic segment spans residues 187-200 (ATDPKRSARDSHVP). The chain crosses the membrane as a helical span at residues 201 to 221 (VLAPLPIGFAVFIVHLATIPI). Residues 222-248 (TGTGINPARSLGAAIIYNKDKAWDHHW) lie on the Extracellular side of the membrane. The short motif at 227 to 229 (NPA) is the NPA 2 element. The helical transmembrane segment at 249 to 269 (IFWVGPFAGAAIAAFYHQFVL) threads the bilayer. Over 270 to 286 (RAGAIKALGSFRSQPHV) the chain is Cytoplasmic. A phosphoserine mark is found at Ser279 and Ser282.

This sequence belongs to the MIP/aquaporin (TC 1.A.8) family. PIP (TC 1.A.8.11) subfamily. As to expression, expressed in green siliques.

The protein resides in the cell membrane. Aquaporins facilitate the transport of water and small neutral solutes across cell membranes. The protein is Probable aquaporin PIP2-5 (PIP2-5) of Arabidopsis thaliana (Mouse-ear cress).